The primary structure comprises 73 residues: Toxin Td5 (73 aa).

A signal peptide spans 1–7 (IGMVVEC). The LCN-type CS-alpha/beta domain occupies 8 to 70 (KDGYLVGNDG…IWNSATNRCR (63 aa)). Intrachain disulfides connect Cys-18–Cys-69, Cys-22–Cys-44, Cys-30–Cys-50, and Cys-34–Cys-52. Residue Arg-70 is modified to Arginine amide.

The protein belongs to the long (4 C-C) scorpion toxin superfamily. Sodium channel inhibitor family. Beta subfamily. Expressed by the venom gland.

It is found in the secreted. Beta toxins bind voltage-independently at site-4 of sodium channels (Nav) and shift the voltage of activation toward more negative potentials thereby affecting sodium channel activation and promoting spontaneous and repetitive firing. The chain is Toxin Td5 from Tityus discrepans (Venezuelan scorpion).